The chain runs to 251 residues: 1-(5-phosphoribosyl)-5-[(5-phosphoribosylamino)methylideneamino] imidazole-4-carboxamide isomerase (251 aa).

Asp-8 serves as the catalytic Proton acceptor. The Proton donor role is filled by Asp-131.

Belongs to the HisA/HisF family.

It localises to the cytoplasm. The catalysed reaction is 1-(5-phospho-beta-D-ribosyl)-5-[(5-phospho-beta-D-ribosylamino)methylideneamino]imidazole-4-carboxamide = 5-[(5-phospho-1-deoxy-D-ribulos-1-ylimino)methylamino]-1-(5-phospho-beta-D-ribosyl)imidazole-4-carboxamide. It functions in the pathway amino-acid biosynthesis; L-histidine biosynthesis; L-histidine from 5-phospho-alpha-D-ribose 1-diphosphate: step 4/9. This Burkholderia ambifaria (strain MC40-6) protein is 1-(5-phosphoribosyl)-5-[(5-phosphoribosylamino)methylideneamino] imidazole-4-carboxamide isomerase.